We begin with the raw amino-acid sequence, 385 residues long: Protein pelota homolog (385 aa).

A Glycyl lysine isopeptide (Lys-Gly) (interchain with G-Cter in SUMO2) cross-link involves residue lysine 162. A phosphoserine mark is found at serine 374, serine 380, serine 381, and serine 382.

This sequence belongs to the eukaryotic release factor 1 family. Pelota subfamily. Component of the Pelota-HBS1L complex, also named Dom34-Hbs1 complex, composed of PELO and HBS1L. Interacts with PINK1. Interacts with ABCE1. Interacts with CNOT4. It depends on a divalent metal cation as a cofactor. As to expression, ubiquitously expressed.

It localises to the cytoplasm. Its function is as follows. Component of the Pelota-HBS1L complex, a complex that recognizes stalled ribosomes and triggers the No-Go Decay (NGD) pathway. In the Pelota-HBS1L complex, PELO recognizes ribosomes stalled at the 3' end of an mRNA and engages stalled ribosomes by destabilizing mRNA in the mRNA channel. Following mRNA extraction from stalled ribosomes by the SKI complex, the Pelota-HBS1L complex promotes recruitment of ABCE1, which drives the disassembly of stalled ribosomes, followed by degradation of damaged mRNAs as part of the NGD pathway. As part of the PINK1-regulated signaling, upon mitochondrial damage is recruited to the ribosome/mRNA-ribonucleoprotein complex associated to mitochondrial outer membrane thereby enabling the recruitment of autophagy receptors and induction of mitophagy. This Mus musculus (Mouse) protein is Protein pelota homolog.